A 394-amino-acid chain; its full sequence is Phosphoglycerate kinase (394 aa).

Residues 21-23, R36, 59-62, R118, and R151 contribute to the substrate site; these read DFN and HLGR. S183 bears the Phosphoserine mark. K201 is an ATP binding site. The residue at position 299 (T299) is a Phosphothreonine. Residues E323 and 350 to 353 contribute to the ATP site; that span reads GGDS.

This sequence belongs to the phosphoglycerate kinase family. As to quaternary structure, monomer.

Its subcellular location is the cytoplasm. It carries out the reaction (2R)-3-phosphoglycerate + ATP = (2R)-3-phospho-glyceroyl phosphate + ADP. Its pathway is carbohydrate degradation; glycolysis; pyruvate from D-glyceraldehyde 3-phosphate: step 2/5. The polypeptide is Phosphoglycerate kinase (Geobacillus sp. (strain WCH70)).